The sequence spans 238 residues: MGRSFEVRKASMAKTAGAKIKVYSKYGKEIYVCAKNGGIDPDMNLSLRHLITKAKKDQVPSHVIEKALDKASGGGGEDYQPARYEGFGPGGISVIVDCLTDNGNRTFQDVRQCFVKTGAKIGTPGVVAHMFDHQAVFQFKGDDEESFLEALMMADCDVTDIELEDGVITIYAPNTEFFKVKTALNTEFPDLVIDVEEITFVPQNYSPVPEEDAEKFQKFLDMLDDCDDVQQVYHNAEM.

It belongs to the TACO1 family.

The protein localises to the cytoplasm. The sequence is that of Probable transcriptional regulatory protein VV2_1184 from Vibrio vulnificus (strain CMCP6).